Here is a 59-residue protein sequence, read N- to C-terminus: UPF0434 protein Shewmr7_2490 (59 aa).

The protein belongs to the UPF0434 family.

In Shewanella sp. (strain MR-7), this protein is UPF0434 protein Shewmr7_2490.